A 333-amino-acid polypeptide reads, in one-letter code: C4-dicarboxylate-binding periplasmic protein DctP (333 aa).

The signal sequence occupies residues 1-26 (MLTRRILGALVGATALSLALSVPALA).

Belongs to the bacterial solute-binding protein 7 family. In terms of assembly, the complex comprises the extracytoplasmic solute receptor protein DctP, and the two transmembrane proteins DctQ and DctM.

The protein localises to the periplasm. Functionally, part of the tripartite ATP-independent periplasmic (TRAP) transport system DctPQM involved in C4-dicarboxylates uptake. Binds C4-dicarboxylates such as fumarate, succinate, L-malate and D-malate. The protein is C4-dicarboxylate-binding periplasmic protein DctP of Rhodobacter capsulatus (Rhodopseudomonas capsulata).